The following is a 124-amino-acid chain: Transmembrane protein 254 (124 aa).

The next 3 helical transmembrane spans lie at 16-36 (LFWV…IFWP), 62-82 (VHAW…YAIV), and 96-116 (LLWF…LIAF).

The protein localises to the membrane. This Bos taurus (Bovine) protein is Transmembrane protein 254 (TMEM254).